The chain runs to 562 residues: NAD-dependent malic enzyme (562 aa).

Residue Tyr101 is the Proton donor of the active site. Arg154 contacts NAD(+). Lys172 (proton acceptor) is an active-site residue. A divalent metal cation-binding residues include Glu243, Asp244, and Asp267. NAD(+) is bound by residues Asp267 and Asn415.

This sequence belongs to the malic enzymes family. In terms of assembly, homotetramer. The cofactor is Mg(2+). Requires Mn(2+) as cofactor.

The enzyme catalyses (S)-malate + NAD(+) = pyruvate + CO2 + NADH. It carries out the reaction oxaloacetate + H(+) = pyruvate + CO2. The polypeptide is NAD-dependent malic enzyme (Aliivibrio fischeri (strain MJ11) (Vibrio fischeri)).